Here is a 1036-residue protein sequence, read N- to C-terminus: MGRTIRRRRSNSSLSEAISVSLGINQDSSVNKMHRASVSAMSPPLCRSYMSGFFTGGNSPMINNLSDSKLPISNKQHPKVIHGSENLHRQTAQLSNEFCSSSVEENSPTIKDYMDIIGNGDRKDDQSMRTIEENIDEEYSDEYSRLLLSPASSNVDDDRNRGLQNSSLPELEDGYAGGYQSLRPSHNLRFRPRNLWHMCTSFPSKFAHYLPAAVLGLLLNILDALSYGMIIFPITEPVFSHLGPTGISMFYISTIISQAVYSGGWSSFPSGIGSEMIEITPFYHTMALAIKEALAGNDDEIITTTIFCYVISSMLTGVVFYALGKLRLGKIVGFFPRHILIGCIGGVGYFLIITGIEVTTRVAKFEYSWPFFSGLFTDYDTLAKWLLPVLLTVVLIGTQRYFKNSLVLPSFYILTLVLFHFIVAIIPTLSLDALRQAGWIFPIANSDSKWYDHYRLFNVHKVHWSLVLQQIPTMMALTFFGILHVPINVPALAMSLQMDKYDVDRELIAHGYSNFFSGLLGSVQNYLVYTNSVLFIRAGADSPFAGFLLIALTICIMIIGPVIISFIPICIVGSLIFLLGYELLVEALVDTWNKLNRFEYLTVVIIVFTMGIFDFVLGIIVGILIACFSFLVDSTKLQTINGEYNGNVARSTVYRDYVQTKFLDGIGEQIYVLKLQNLLFFGTIISIEEKIERLLQISNKDATKRRIKYLILDFKNINADNIDYSAAEGFNRIKRFTETKRIKLIISSIKERDRIYNAFNNVGLLNDVELFADLNSALEWCENEFLFQYKQLRKKAKERLEEGKQNNVVSAVIAATKNKKIDTIGNGLNRGSNGDTARNLMSLPTNTPRNYQILSVAQNVFVNDEQAVKNFKKEYKDDEPVLPILLFALKQYRPDIISEVQKVREKEIKFWAQLCPYFTRRRLASQSHLLHADNIFFLVETGMLKATYELPQGTLYEIFSNGTCFGKIIAPGNAMPREQKLTIETETDSVLWVIDSSSLNKLKEDNLALYVEVALMVMCIKDTRFKELLGYTLVSA.

The Vacuolar segment spans residues 1–213 (MGRTIRRRRS…SKFAHYLPAA (213 aa)). A phosphoserine mark is found at serine 42 and serine 127. Position 130 is a phosphothreonine (threonine 130). Phosphoserine is present on residues serine 140, serine 144, serine 149, serine 152, and serine 153. Residues 214-234 (VLGLLLNILDALSYGMIIFPI) form a helical membrane-spanning segment. Residues 235–236 (TE) lie on the Cytoplasmic side of the membrane. The helical transmembrane segment at 237–257 (PVFSHLGPTGISMFYISTIIS) threads the bilayer. Topologically, residues 258-269 (QAVYSGGWSSFP) are vacuolar. A helical transmembrane segment spans residues 270–290 (SGIGSEMIEITPFYHTMALAI). At 291 to 300 (KEALAGNDDE) the chain is on the cytoplasmic side. The chain crosses the membrane as a helical span at residues 301–321 (IITTTIFCYVISSMLTGVVFY). The Vacuolar portion of the chain corresponds to 322-338 (ALGKLRLGKIVGFFPRH). A helical transmembrane segment spans residues 339–359 (ILIGCIGGVGYFLIITGIEVT). Over 360–375 (TRVAKFEYSWPFFSGL) the chain is Cytoplasmic. A helical transmembrane segment spans residues 376–396 (FTDYDTLAKWLLPVLLTVVLI). Over 397–405 (GTQRYFKNS) the chain is Vacuolar. Residues 406-426 (LVLPSFYILTLVLFHFIVAII) form a helical membrane-spanning segment. The Cytoplasmic segment spans residues 427 to 473 (PTLSLDALRQAGWIFPIANSDSKWYDHYRLFNVHKVHWSLVLQQIPT). A helical membrane pass occupies residues 474–494 (MMALTFFGILHVPINVPALAM). Residues 495-515 (SLQMDKYDVDRELIAHGYSNF) are Vacuolar-facing. A helical membrane pass occupies residues 516–536 (FSGLLGSVQNYLVYTNSVLFI). The Cytoplasmic segment spans residues 537-546 (RAGADSPFAG). Residues 547–567 (FLLIALTICIMIIGPVIISFI) form a helical membrane-spanning segment. A topological domain (vacuolar) is located at residue proline 568. Residues 569–589 (ICIVGSLIFLLGYELLVEALV) traverse the membrane as a helical segment. Topologically, residues 590-604 (DTWNKLNRFEYLTVV) are cytoplasmic. The helical transmembrane segment at 605–625 (IIVFTMGIFDFVLGIIVGILI) threads the bilayer. Over 626-664 (ACFSFLVDSTKLQTINGEYNGNVARSTVYRDYVQTKFLD) the chain is Vacuolar. One can recognise an STAS domain in the interval 660-781 (TKFLDGIGEQ…ADLNSALEWC (122 aa)). A helical transmembrane segment spans residues 665-685 (GIGEQIYVLKLQNLLFFGTII). At 686–1036 (SIEEKIERLL…ELLGYTLVSA (351 aa)) the chain is on the cytoplasmic side. The residue at position 842 (serine 842) is a Phosphoserine. Threonine 847 carries the phosphothreonine modification.

It localises to the vacuole membrane. Its function is as follows. Amino acid transporter involved in vacuolar uptake of basic amino acids for storage during nitrogen replete condititions. May function as an amino acid/proton antiporter. This chain is Vacuolar basic amino acid transporter VSB1, found in Saccharomyces cerevisiae (strain ATCC 204508 / S288c) (Baker's yeast).